The chain runs to 216 residues: Probable GTP-binding protein EngB (216 aa).

Positions 26-200 (EGIEIAFAGR…RAKLDTWFAP (175 aa)) constitute an EngB-type G domain. GTP contacts are provided by residues 34–41 (GRSNAGKS), 61–65 (GRTQL), 79–82 (DLPG), 146–149 (TKAD), and 179–181 (YSS). Mg(2+) contacts are provided by Ser41 and Thr63.

It belongs to the TRAFAC class TrmE-Era-EngA-EngB-Septin-like GTPase superfamily. EngB GTPase family. Mg(2+) is required as a cofactor.

Functionally, necessary for normal cell division and for the maintenance of normal septation. The protein is Probable GTP-binding protein EngB of Vibrio vulnificus (strain YJ016).